A 473-amino-acid polypeptide reads, in one-letter code: Vasculin (473 aa).

Disordered stretches follow at residues 1 to 25 (MAQH…SSLN), 44 to 170 (RRRH…SRTP), and 186 to 341 (SGFP…HQER). At Ser49 the chain carries Phosphoserine. Omega-N-methylarginine is present on Arg87. Positions 94–117 (NSRSRSSIFHSGKSQGLHENSIPD) are enriched in polar residues. The segment covering 119–133 (ETGRKEDKRERRQFE) has biased composition (basic and acidic residues). 2 stretches are compositionally biased toward polar residues: residues 193 to 204 (NLQSQPVKNGTG) and 248 to 286 (NFNT…QQPR). Residues Ser274, Ser276, Ser322, and Ser381 each carry the phosphoserine modification. Positions 293-329 (MRSDKKSEFLKALKRDRVEEEHEDESHAGSEKDDDSF) are enriched in basic and acidic residues. A disordered region spans residues 450–473 (TFKPTIENDDTETSSSDTSDDDDV). Residues 456–473 (ENDDTETSSSDTSDDDDV) are compositionally biased toward acidic residues.

Belongs to the vasculin family. Interacts with GTF2B, GTF2F2, RNA polymerase II and TBP. As to expression, ubiquitously expressed (at protein level).

The protein resides in the nucleus. Its function is as follows. Functions as a GC-rich promoter-specific transactivating transcription factor. This Mus musculus (Mouse) protein is Vasculin (Gpbp1).